The primary structure comprises 623 residues: Glutathione import ATP-binding protein GsiA (623 aa).

ABC transporter domains lie at 15 to 269 and 314 to 564; these read VENL…RALL and LRVR…RKLL. Residues 49–56 and 357–364 contribute to the ATP site; these read GESGSGKS.

Belongs to the ABC transporter superfamily. Glutathione importer (TC 3.A.1.5.11) family. As to quaternary structure, the complex is composed of two ATP-binding proteins (GsiA), two transmembrane proteins (GsiC and GsiD) and a solute-binding protein (GsiB).

The protein localises to the cell inner membrane. The catalysed reaction is glutathione(out) + ATP + H2O = glutathione(in) + ADP + phosphate + H(+). In terms of biological role, part of the ABC transporter complex GsiABCD involved in glutathione import. Responsible for energy coupling to the transport system. In Shigella flexneri serotype 5b (strain 8401), this protein is Glutathione import ATP-binding protein GsiA.